The primary structure comprises 648 residues: FAD-binding monooxygenase trt3 (648 aa).

FAD contacts are provided by residues 118 to 121 (TWYW), 130 to 131 (DI), and Y136. Residue 128-130 (MCD) participates in NADP(+) binding. NADP(+) contacts are provided by residues 274-280 (TGSTAVQ) and 297-298 (RT).

This sequence belongs to the FAD-binding monooxygenase family. The cofactor is FAD.

The protein operates within secondary metabolite biosynthesis; terpenoid biosynthesis. Its function is as follows. FAD-binding monooxygenase; part of the gene cluster that mediates the biosynthesis of terretonin, a fungal meroterpenoid that acts as a mycotoxin. The first step of the pathway is the synthesis of 3,5-dimethylorsellinic acid (DMOA) by the polyketide synthase trt4. DMOA is then prenylated into farnesyl-DMOA by the polyprenyl transferase trt2. Methylation by the methyltransferase trt5 then leads to farnesyl-DMOA methyl ester which is further subject to epoxidation by the FAD-dependent monooxygenase trt8 to yield epoxyfarnesyl-DMOA methyl ester. Cyclization of epoxyfarnesyl-DMOA methyl ester by the terpene cyclase trt1 leads to a tetracycle intermediate which is in turn converted to preterretonin. Dehydrogenase trt9 comes next to transform preterretonin to preterrenoid. The FAD-dependent monooxygenase trt3 is then required for the C-hydroxylation at C16 of preterrenoid to yield terrenoid. The cytochrome P450 trt6 catalyzes three successive oxidations to transform terrenoid into an unstable intermediate, which then undergoes the D-ring expansion and unusual rearrangement of the methoxy group to afford the core skeleton of terretonin. Trt14 catalyzes the D-ring expansion of terretonin involving intramolecular methoxy rearrangement as well as the hydrolysis of the expanded D-ring and the methyl ester moiety. Finally, the nonheme iron-dependent dioxygenase trt7 accomplishes the last two oxidation reactions steps to complete the biosynthesis of terretonin. Terretonin C is produced via spontaneous decarboxylation of the terretonin precursor. Another shunt product of the terretonin biosynthesis is dihydrofarnesyl-DMOA, derived from epoxyfarnesyl-DMOA through hydrolysis of the epoxide. The protein is FAD-binding monooxygenase trt3 of Aspergillus terreus (strain NIH 2624 / FGSC A1156).